Reading from the N-terminus, the 494-residue chain is Serine carboxypeptidase-like 21 (494 aa).

Residues 1–23 (MGRLVEAIIASILLSLCFTITKS) form the signal peptide. Residues N37 and N69 are each glycosylated (N-linked (GlcNAc...) asparagine). Intrachain disulfides connect C85–C383, C247–C263, and C286–C350. Residue S179 is part of the active site. N-linked (GlcNAc...) asparagine glycans are attached at residues N198 and N248. The N-linked (GlcNAc...) asparagine glycan is linked to N402. The active site involves D418. N460 is a glycosylation site (N-linked (GlcNAc...) asparagine). The active site involves H471.

Belongs to the peptidase S10 family. As to expression, expressed in flowers and siliques.

It is found in the secreted. Its function is as follows. Probable carboxypeptidase. This Arabidopsis thaliana (Mouse-ear cress) protein is Serine carboxypeptidase-like 21 (SCPL21).